A 68-amino-acid chain; its full sequence is UPF0435 protein SAOUHSC_02093 (68 aa).

This sequence belongs to the UPF0435 family.

The protein is UPF0435 protein SAOUHSC_02093 of Staphylococcus aureus (strain NCTC 8325 / PS 47).